We begin with the raw amino-acid sequence, 332 residues long: Glycerol-3-phosphate dehydrogenase [NAD(P)+] (332 aa).

Ser11, Trp12, Lys32, and Lys106 together coordinate NADPH. The sn-glycerol 3-phosphate site is built by Lys106, Gly137, and Ser139. Residue Ala141 coordinates NADPH. The sn-glycerol 3-phosphate site is built by Lys192, Asp245, Ser255, Arg256, and Asn257. Catalysis depends on Lys192, which acts as the Proton acceptor. Residue Arg256 coordinates NADPH. The NADPH site is built by Val280 and Glu282.

The protein belongs to the NAD-dependent glycerol-3-phosphate dehydrogenase family.

It localises to the cytoplasm. It catalyses the reaction sn-glycerol 3-phosphate + NAD(+) = dihydroxyacetone phosphate + NADH + H(+). The catalysed reaction is sn-glycerol 3-phosphate + NADP(+) = dihydroxyacetone phosphate + NADPH + H(+). It participates in membrane lipid metabolism; glycerophospholipid metabolism. Its function is as follows. Catalyzes the reduction of the glycolytic intermediate dihydroxyacetone phosphate (DHAP) to sn-glycerol 3-phosphate (G3P), the key precursor for phospholipid synthesis. The polypeptide is Glycerol-3-phosphate dehydrogenase [NAD(P)+] (Macrococcus caseolyticus (strain JCSC5402) (Macrococcoides caseolyticum)).